Consider the following 305-residue polypeptide: Nuclear egress protein 1 (305 aa).

The disordered stretch occupies residues 1–42 (MYDIAPRRSGSRPGPGRDKTRRRSRFSAAGNPGVERRASRKS). A CCCH-type zinc finger spans residues 105–224 (CLTLSGMGYY…YVIFPGTSAH (120 aa)).

This sequence belongs to the herpesviridae NEC1 protein family. As to quaternary structure, forms a heterohexameric complex with NEC2. Interacts with capsid vertex specific component 2/CVC2; this interaction directs the capsid to the host inner nuclear membrane to initiate budding. Post-translationally, phosphorylated at serine residues in the N-terminus. This phosphorylation regulates the localization within the inner nuclear membrane.

It is found in the host nucleus inner membrane. In terms of biological role, plays an essential role in virion nuclear egress, the first step of virion release from infected cell. Within the host nucleus, NEC1 interacts with the newly formed capsid through the vertexes and directs it to the inner nuclear membrane by associating with NEC2. Induces the budding of the capsid at the inner nuclear membrane as well as its envelopment into the perinuclear space. There, the NEC1/NEC2 complex promotes the fusion of the enveloped capsid with the outer nuclear membrane and the subsequent release of the viral capsid into the cytoplasm where it will reach the secondary budding sites in the host Golgi or trans-Golgi network. This is Nuclear egress protein 1 from Human herpesvirus 2 (strain HG52) (HHV-2).